The sequence spans 431 residues: Enolase (431 aa).

Residue glutamine 163 participates in (2R)-2-phosphoglycerate binding. Glutamate 205 acts as the Proton donor in catalysis. Positions 242, 288, and 315 each coordinate Mg(2+). (2R)-2-phosphoglycerate contacts are provided by lysine 340, arginine 369, serine 370, and lysine 391. Lysine 340 functions as the Proton acceptor in the catalytic mechanism.

Belongs to the enolase family. Mg(2+) serves as cofactor.

The protein localises to the cytoplasm. Its subcellular location is the secreted. It localises to the cell surface. It catalyses the reaction (2R)-2-phosphoglycerate = phosphoenolpyruvate + H2O. The protein operates within carbohydrate degradation; glycolysis; pyruvate from D-glyceraldehyde 3-phosphate: step 4/5. Its function is as follows. Catalyzes the reversible conversion of 2-phosphoglycerate (2-PG) into phosphoenolpyruvate (PEP). It is essential for the degradation of carbohydrates via glycolysis. This Bacillus mycoides (strain KBAB4) (Bacillus weihenstephanensis) protein is Enolase.